The sequence spans 185 residues: Large ribosomal subunit protein uL5 (185 aa).

It belongs to the universal ribosomal protein uL5 family. Part of the 50S ribosomal subunit; part of the 5S rRNA/L5/L18/L25 subcomplex. Contacts the 5S rRNA and the P site tRNA. Forms a bridge to the 30S subunit in the 70S ribosome.

In terms of biological role, this is one of the proteins that bind and probably mediate the attachment of the 5S RNA into the large ribosomal subunit, where it forms part of the central protuberance. In the 70S ribosome it contacts protein S13 of the 30S subunit (bridge B1b), connecting the 2 subunits; this bridge is implicated in subunit movement. Contacts the P site tRNA; the 5S rRNA and some of its associated proteins might help stabilize positioning of ribosome-bound tRNAs. In Bartonella bacilliformis (strain ATCC 35685 / KC583 / Herrer 020/F12,63), this protein is Large ribosomal subunit protein uL5.